Reading from the N-terminus, the 321-residue chain is Ribose-phosphate pyrophosphokinase (321 aa).

ATP contacts are provided by residues 44–46 and 103–104; these read DGE and RQ. Mg(2+) is bound by residues His-137 and Asp-179. The active site involves Lys-202. D-ribose 5-phosphate-binding positions include Arg-204, Asp-228, and 232–236; that span reads DTAGT.

The protein belongs to the ribose-phosphate pyrophosphokinase family. Class I subfamily. In terms of assembly, homohexamer. It depends on Mg(2+) as a cofactor.

The protein localises to the cytoplasm. The catalysed reaction is D-ribose 5-phosphate + ATP = 5-phospho-alpha-D-ribose 1-diphosphate + AMP + H(+). It participates in metabolic intermediate biosynthesis; 5-phospho-alpha-D-ribose 1-diphosphate biosynthesis; 5-phospho-alpha-D-ribose 1-diphosphate from D-ribose 5-phosphate (route I): step 1/1. In terms of biological role, involved in the biosynthesis of the central metabolite phospho-alpha-D-ribosyl-1-pyrophosphate (PRPP) via the transfer of pyrophosphoryl group from ATP to 1-hydroxyl of ribose-5-phosphate (Rib-5-P). The sequence is that of Ribose-phosphate pyrophosphokinase from Staphylococcus aureus (strain COL).